Consider the following 333-residue polypeptide: D-fructose 1,6-bisphosphatase class 2/sedoheptulose 1,7-bisphosphatase (333 aa).

Mn(2+) contacts are provided by D33, E57, D85, and E88. Substrate contacts are provided by residues 88–90 (EGT), Y119, 164–166 (RTR), and 186–188 (DGD). Position 213 (E213) interacts with Mn(2+).

The protein belongs to the FBPase class 2 family. As to quaternary structure, homotetramer. Mn(2+) serves as cofactor.

The catalysed reaction is beta-D-fructose 1,6-bisphosphate + H2O = beta-D-fructose 6-phosphate + phosphate. It carries out the reaction D-sedoheptulose 1,7-bisphosphate + H2O = D-sedoheptulose 7-phosphate + phosphate. It participates in carbohydrate biosynthesis; Calvin cycle. In terms of biological role, catalyzes the hydrolysis of fructose 1,6-bisphosphate (Fru 1,6-P2) and sedoheptulose 1,7-bisphosphate (Sed 1,7-P2) to fructose 6-phosphate and sedoheptulose 7-phosphate, respectively. The chain is D-fructose 1,6-bisphosphatase class 2/sedoheptulose 1,7-bisphosphatase from Prochlorococcus marinus (strain MIT 9312).